The primary structure comprises 262 residues: Indole-3-glycerol phosphate synthase (262 aa).

Belongs to the TrpC family.

The enzyme catalyses 1-(2-carboxyphenylamino)-1-deoxy-D-ribulose 5-phosphate + H(+) = (1S,2R)-1-C-(indol-3-yl)glycerol 3-phosphate + CO2 + H2O. It participates in amino-acid biosynthesis; L-tryptophan biosynthesis; L-tryptophan from chorismate: step 4/5. The sequence is that of Indole-3-glycerol phosphate synthase from Staphylococcus epidermidis (strain ATCC 35984 / DSM 28319 / BCRC 17069 / CCUG 31568 / BM 3577 / RP62A).